A 1703-amino-acid polypeptide reads, in one-letter code: Mediator of RNA polymerase II transcription subunit 14 (1703 aa).

Over residues 755 to 766 (LSQTADLATSSA) the composition is skewed to polar residues. The segment at 755 to 781 (LSQTADLATSSAGPLLRKDQKPRKRSA) is disordered.

The protein belongs to the Mediator complex subunit 14 family. Component of the Mediator complex. Interacts with CDKE-1, HDA19 and LUG. Interacts with PTAC12/HMR/PAP5 and PIF4. As to expression, expressed in roots, stems, developing embryos, young leaf primordia, shoot apical meristems, inflorescence meristems, tapetum in anthers, ovules and floral organ primordia, but not in mature organs.

It localises to the nucleus. In terms of biological role, component of the Mediator complex, a coactivator involved in the regulated transcription of nearly all RNA polymerase II-dependent genes. Mediator functions as a bridge to convey information from gene-specific regulatory proteins to the basal RNA polymerase II transcription machinery. The Mediator complex, having a compact conformation in its free form, is recruited to promoters by direct interactions with regulatory proteins and serves for the assembly of a functional pre-initiation complex with RNA polymerase II and the general transcription factors. Binds to G-box (5'-CACGTG-3')-containing regions of target genes promoters (e.g. IAA29 and IAA19). Involved in defining the duration of cell proliferation. Element of a PIF4/HMR/MED14-dependent thermoresponsive process; required for thermomorphogenetic hypocotyl growth in response to daytime warm temperature elicitation by associating to the promoters of thermoresponsive growth-relevant genes (e.g. mainly involved in biosynthesis and signaling of the phytohormone auxin); this also process implies PIF4 and its transcriptional coactivator PTAC12/HMR/PAP5 to promote the expression of target genes. This chain is Mediator of RNA polymerase II transcription subunit 14, found in Arabidopsis thaliana (Mouse-ear cress).